The following is a 102-amino-acid chain: Large ribosomal subunit protein bL21 (102 aa).

Belongs to the bacterial ribosomal protein bL21 family. As to quaternary structure, part of the 50S ribosomal subunit. Contacts protein L20.

Functionally, this protein binds to 23S rRNA in the presence of protein L20. In Ehrlichia ruminantium (strain Welgevonden), this protein is Large ribosomal subunit protein bL21.